A 508-amino-acid chain; its full sequence is Photosystem II CP47 reaction center protein (508 aa).

6 helical membrane passes run 21–36, 101–115, 140–156, 203–218, 237–252, and 457–472; these read AVHIMHTALVAGWAGS, ILFSGLCFLAAIWHW, GIHLFLSGLACFGFGAF, IAAGTLGILAGLFHLS, VLSSSIAAVFFAAFVV, and SFALLFFFGHIWHGAR.

This sequence belongs to the PsbB/PsbC family. PsbB subfamily. As to quaternary structure, PSII is composed of 1 copy each of membrane proteins PsbA, PsbB, PsbC, PsbD, PsbE, PsbF, PsbH, PsbI, PsbJ, PsbK, PsbL, PsbM, PsbT, PsbX, PsbY, PsbZ, Psb30/Ycf12, at least 3 peripheral proteins of the oxygen-evolving complex and a large number of cofactors. It forms dimeric complexes. It depends on Binds multiple chlorophylls. PSII binds additional chlorophylls, carotenoids and specific lipids. as a cofactor.

It is found in the plastid. The protein resides in the chloroplast thylakoid membrane. In terms of biological role, one of the components of the core complex of photosystem II (PSII). It binds chlorophyll and helps catalyze the primary light-induced photochemical processes of PSII. PSII is a light-driven water:plastoquinone oxidoreductase, using light energy to abstract electrons from H(2)O, generating O(2) and a proton gradient subsequently used for ATP formation. This Oenothera argillicola (Appalachian evening primrose) protein is Photosystem II CP47 reaction center protein.